The following is a 238-amino-acid chain: tRNA (guanine-N(7)-)-methyltransferase (238 aa).

Glutamate 68, glutamate 93, aspartate 120, and aspartate 143 together coordinate S-adenosyl-L-methionine. The active site involves aspartate 143. Residues lysine 147, aspartate 179, and 216–219 (TKFE) contribute to the substrate site.

Belongs to the class I-like SAM-binding methyltransferase superfamily. TrmB family.

The enzyme catalyses guanosine(46) in tRNA + S-adenosyl-L-methionine = N(7)-methylguanosine(46) in tRNA + S-adenosyl-L-homocysteine. It functions in the pathway tRNA modification; N(7)-methylguanine-tRNA biosynthesis. Functionally, catalyzes the formation of N(7)-methylguanine at position 46 (m7G46) in tRNA. The polypeptide is tRNA (guanine-N(7)-)-methyltransferase (Shewanella baltica (strain OS195)).